The primary structure comprises 239 residues: Putative 3-methyladenine DNA glycosylase (239 aa).

This sequence belongs to the DNA glycosylase MPG family.

This chain is Putative 3-methyladenine DNA glycosylase, found in Pseudomonas aeruginosa (strain UCBPP-PA14).